The chain runs to 333 residues: Transaldolase (333 aa).

Residue K135 is the Schiff-base intermediate with substrate of the active site.

The protein belongs to the transaldolase family. Type 1 subfamily. Homodimer.

It localises to the cytoplasm. It carries out the reaction D-sedoheptulose 7-phosphate + D-glyceraldehyde 3-phosphate = D-erythrose 4-phosphate + beta-D-fructose 6-phosphate. Its pathway is carbohydrate degradation; pentose phosphate pathway; D-glyceraldehyde 3-phosphate and beta-D-fructose 6-phosphate from D-ribose 5-phosphate and D-xylulose 5-phosphate (non-oxidative stage): step 2/3. Its function is as follows. Transaldolase is important for the balance of metabolites in the pentose-phosphate pathway. The polypeptide is Transaldolase (Prochlorococcus marinus (strain MIT 9301)).